The primary structure comprises 462 residues: Nitrate/nitrite transporter NarU (462 aa).

Topologically, residues 1–35 (MALQNEKNSRYLLRDWKPENPAFWENKGKHIARRN) are cytoplasmic. A helical transmembrane segment spans residues 36 to 56 (LWISVSCLLLAFCVWMLFSAV). Topologically, residues 57–76 (TVNLNKIGFNFTTDQLFLLT) are periplasmic. A helical membrane pass occupies residues 77–97 (ALPSVSGALLRVPYSFMVPIF). Residues 98–101 (GGRR) lie on the Cytoplasmic side of the membrane. A helical transmembrane segment spans residues 102–122 (WTVFSTAILIIPCVWLGIAVQ). At 123 to 125 (NPN) the chain is on the periplasmic side. A helical membrane pass occupies residues 126 to 146 (TPFGIFIVIALLCGFAGANFA). The Cytoplasmic segment spans residues 147–180 (SSMGNISFFFPKAKQGSALGINGGLGNLGVSVMQ). A helical membrane pass occupies residues 181-201 (LVAPLVIFVPVFAFLGVNGVP). Residues 202–206 (QADGS) lie on the Periplasmic side of the membrane. Residues 207–227 (VMSLANAAWIWVPLLAIATIA) traverse the membrane as a helical segment. The Cytoplasmic portion of the chain corresponds to 228-258 (AWSGMNDIASSRASIADQLPVLQRLHLWLLS). A helical transmembrane segment spans residues 259-279 (LLYLATFGSFIGFSAGFAMLA). The Periplasmic portion of the chain corresponds to 280-287 (KTQFPDVN). A helical transmembrane segment spans residues 288–308 (ILRLAFFGPFIGAIARSVGGA). Topologically, residues 309–317 (ISDKFGGVR) are cytoplasmic. The helical transmembrane segment at 318–338 (VTLINFIFMAIFSALLFLTLP) threads the bilayer. Residues 339–344 (GTGSGN) are Periplasmic-facing. Residues 345–365 (FIAFYAVFMGLFLTAGLGSGS) form a helical membrane-spanning segment. The Cytoplasmic segment spans residues 366–401 (TFQMIAVIFRQITIYRVKMKGGSDEQAHKEAVTETA). A helical transmembrane segment spans residues 402 to 422 (AALGFISAIGAVGGFFIPQAF). Residues 423-432 (GMSLNMTGSP) lie on the Periplasmic side of the membrane. The helical transmembrane segment at 433–453 (VGAMKVFLIFYIVCVLLTWLV) threads the bilayer. Residues 454-462 (YGRRKFSQK) are Cytoplasmic-facing.

This sequence belongs to the major facilitator superfamily. Nitrate/nitrite porter (TC 2.A.1.8) family.

It localises to the cell inner membrane. Its function is as follows. Catalyzes nitrate uptake, nitrite uptake and nitrite export across the cytoplasmic membrane. May function as a nitrate/H(+) and nitrite/H(+) channel. Could confer a selective advantage during severe nutrient starvation or slow growth. In Escherichia coli (strain K12), this protein is Nitrate/nitrite transporter NarU (narU).